The following is an 89-amino-acid chain: Small ribosomal subunit protein bS20 (89 aa).

It belongs to the bacterial ribosomal protein bS20 family.

Functionally, binds directly to 16S ribosomal RNA. In Wolbachia sp. subsp. Drosophila simulans (strain wRi), this protein is Small ribosomal subunit protein bS20.